A 205-amino-acid polypeptide reads, in one-letter code: Large ribosomal subunit protein uL4 (205 aa).

The segment at 43–97 (GKRQGTSKVKNRSAVRGGGKKPWRQKGTGRARQGSIRAPQWRGGGTVFGPTPRSY) is disordered. The segment covering 51 to 71 (VKNRSAVRGGGKKPWRQKGTG) has biased composition (basic residues).

It belongs to the universal ribosomal protein uL4 family. As to quaternary structure, part of the 50S ribosomal subunit.

In terms of biological role, one of the primary rRNA binding proteins, this protein initially binds near the 5'-end of the 23S rRNA. It is important during the early stages of 50S assembly. It makes multiple contacts with different domains of the 23S rRNA in the assembled 50S subunit and ribosome. Forms part of the polypeptide exit tunnel. The chain is Large ribosomal subunit protein uL4 from Lactobacillus acidophilus (strain ATCC 700396 / NCK56 / N2 / NCFM).